We begin with the raw amino-acid sequence, 351 residues long: ABC transporter nucleoside-binding protein BmpA (351 aa).

The first 21 residues, 1-21 (MKKRVIAVSAIALASVAVLAG), serve as a signal peptide directing secretion. Cys-22 is lipidated: N-palmitoyl cysteine. Cys-22 carries the S-diacylglycerol cysteine lipid modification.

It belongs to the BMP lipoprotein family. As to quaternary structure, the complex is composed of two ATP-binding proteins (NupA), two transmembrane proteins (NupB and NupC) and a solute-binding protein (BmpA).

It is found in the cell membrane. Its function is as follows. Part of an ABC transporter complex involved in the uptake of all common nucleosides. In Lactococcus lactis subsp. cremoris (strain MG1363), this protein is ABC transporter nucleoside-binding protein BmpA.